The following is a 198-amino-acid chain: Nucleoplasmin (198 aa).

The tract at residues 35 to 38 is acidic tract A1; that stretch reads SDED. A compositionally biased stretch (acidic residues) spans 125–145; it reads SWAEEEGEEEVEEEEEEEDPE. A disordered region spans residues 125 to 198; that stretch reads SWAEEEGEEE…GRGRKPAAKK (74 aa). The tract at residues 128–145 is acidic tract A2; it reads EEEGEEEVEEEEEEEDPE. The segment covering 150 to 167 has biased composition (basic residues); it reads AVKRPAASKKGSQAKKKK. The Bipartite nuclear localization signal signature appears at 152 to 167; it reads KRPAASKKGSQAKKKK. The segment at 172–174 is acidic tract A3; the sequence is EEE. Over residues 183–198 the composition is skewed to basic residues; that stretch reads KKGKGAGRGRKPAAKK.

The protein belongs to the nucleoplasmin family. As to quaternary structure, homopentamer. As to expression, expressed in oocytes.

The protein localises to the nucleus. In terms of biological role, acts as a chaperone for histones, such as histone H2A-H2B, and thus regulates the assembly of nucleosome cores. Involved in chromatin remodeling, especially during fertilization and early embryonic development. May be involved in sperm chromatin decondensation during fertilization. In Rhinella marina (Cane toad), this protein is Nucleoplasmin.